Reading from the N-terminus, the 208-residue chain is Holliday junction branch migration complex subunit RuvA (208 aa).

Residues 1-64 (MIGRLHGTVA…DDGQALYGFA (64 aa)) are domain I. The domain II stretch occupies residues 65 to 143 (SRAERDLFRV…GLLPAASGGV (79 aa)). Residues 139-162 (ASGGVPARTGSGEQLDAPAGPQGS) are disordered. The flexible linker stretch occupies residues 144-157 (PARTGSGEQLDAPA). The tract at residues 158 to 208 (GPQGSREDAVSALVALGYKPAEAGRLVNAVPGANDLPSEELIRRALQAAVR) is domain III.

The protein belongs to the RuvA family. As to quaternary structure, homotetramer. Forms an RuvA(8)-RuvB(12)-Holliday junction (HJ) complex. HJ DNA is sandwiched between 2 RuvA tetramers; dsDNA enters through RuvA and exits via RuvB. An RuvB hexamer assembles on each DNA strand where it exits the tetramer. Each RuvB hexamer is contacted by two RuvA subunits (via domain III) on 2 adjacent RuvB subunits; this complex drives branch migration. In the full resolvosome a probable DNA-RuvA(4)-RuvB(12)-RuvC(2) complex forms which resolves the HJ.

It is found in the cytoplasm. The RuvA-RuvB-RuvC complex processes Holliday junction (HJ) DNA during genetic recombination and DNA repair, while the RuvA-RuvB complex plays an important role in the rescue of blocked DNA replication forks via replication fork reversal (RFR). RuvA specifically binds to HJ cruciform DNA, conferring on it an open structure. The RuvB hexamer acts as an ATP-dependent pump, pulling dsDNA into and through the RuvAB complex. HJ branch migration allows RuvC to scan DNA until it finds its consensus sequence, where it cleaves and resolves the cruciform DNA. This is Holliday junction branch migration complex subunit RuvA from Alkalilimnicola ehrlichii (strain ATCC BAA-1101 / DSM 17681 / MLHE-1).